A 244-amino-acid polypeptide reads, in one-letter code: MFRCLMQNHQRRALVLFSGGQDSTTCLAWALERYAHVETLGFDYGQRHRVELDARQVVLRELRANFPDWAQRLGDDHLLDLGILAQVGDTAMTSDREIEMQANGLPNTFVPGRNLLFLTLAAALGYRRQLDVLVGGMCETDFSGYPDCRDDTIKSQQVTLGLGLGTRVTIETPLMWLDKAQTWELADRLGGQALVDMVIEHSHTCYLGERGQRHDWGYGCGHCPACALRKNGWERWVAGAAYAD.

17 to 27 (FSGGQDSTTCL) is an ATP binding site. Residues cysteine 205, cysteine 220, cysteine 223, and cysteine 226 each coordinate Zn(2+).

Belongs to the QueC family. The cofactor is Zn(2+).

It carries out the reaction 7-carboxy-7-deazaguanine + NH4(+) + ATP = 7-cyano-7-deazaguanine + ADP + phosphate + H2O + H(+). Its pathway is purine metabolism; 7-cyano-7-deazaguanine biosynthesis. Catalyzes the ATP-dependent conversion of 7-carboxy-7-deazaguanine (CDG) to 7-cyano-7-deazaguanine (preQ(0)). In Bordetella parapertussis (strain 12822 / ATCC BAA-587 / NCTC 13253), this protein is 7-cyano-7-deazaguanine synthase.